The primary structure comprises 467 residues: Asparagine--tRNA ligase (467 aa).

Belongs to the class-II aminoacyl-tRNA synthetase family. Homodimer.

It localises to the cytoplasm. It catalyses the reaction tRNA(Asn) + L-asparagine + ATP = L-asparaginyl-tRNA(Asn) + AMP + diphosphate + H(+). In Protochlamydia amoebophila (strain UWE25), this protein is Asparagine--tRNA ligase.